The chain runs to 338 residues: Lipoate-protein ligase A (338 aa).

Positions 29–216 constitute a BPL/LPL catalytic domain; it reads PATQRVLFLW…AFFAHYGERV (188 aa). ATP-binding positions include R71, 76–79, and K134; that span reads GAVF. K134 serves as a coordination point for (R)-lipoate.

This sequence belongs to the LplA family. Monomer.

It is found in the cytoplasm. It catalyses the reaction L-lysyl-[lipoyl-carrier protein] + (R)-lipoate + ATP = N(6)-[(R)-lipoyl]-L-lysyl-[lipoyl-carrier protein] + AMP + diphosphate + H(+). It functions in the pathway protein modification; protein lipoylation via exogenous pathway; protein N(6)-(lipoyl)lysine from lipoate: step 1/2. It participates in protein modification; protein lipoylation via exogenous pathway; protein N(6)-(lipoyl)lysine from lipoate: step 2/2. Its function is as follows. Catalyzes both the ATP-dependent activation of exogenously supplied lipoate to lipoyl-AMP and the transfer of the activated lipoyl onto the lipoyl domains of lipoate-dependent enzymes. This is Lipoate-protein ligase A from Escherichia coli (strain 55989 / EAEC).